The chain runs to 307 residues: Deaminated glutathione amidase (307 aa).

A CN hydrolase domain is found at 6 to 285 (KRVAVAQLCS…PQLILADLDR (280 aa)). Glu-45 functions as the Proton acceptor in the catalytic mechanism. The active-site Proton donor is the Lys-127. The Nucleophile role is filled by Cys-169. Substrate is bound by residues Arg-173 and Thr-199.

It belongs to the carbon-nitrogen hydrolase superfamily. NIT1/NIT2 family. As to quaternary structure, homodimer.

Its subcellular location is the cytoplasm. It is found in the mitochondrion. The catalysed reaction is N-(4-oxoglutaryl)-L-cysteinylglycine + H2O = L-cysteinylglycine + 2-oxoglutarate. The enzyme catalyses N-(4-carboxy-4-oxobutanoyl)-L-ethylglycylglycine + H2O = N-(2-aminobutanoyl)glycine + 2-oxoglutarate. Functionally, catalyzes the hydrolysis of the amide bond in N-(4-oxoglutarate)-L-cysteinylglycine (deaminated glutathione), a metabolite repair reaction to dispose of the harmful deaminated glutathione. Possesses amidase activity toward deaminated ophthalmate in vitro. The protein is Deaminated glutathione amidase (NIT2) of Saccharomyces cerevisiae (strain ATCC 204508 / S288c) (Baker's yeast).